A 171-amino-acid chain; its full sequence is Ribosome maturation factor RimM (171 aa).

The 75-residue stretch at 93-167 (DGVYYYKDIF…KVYVELMEGL (75 aa)) folds into the PRC barrel domain.

The protein belongs to the RimM family. In terms of assembly, binds ribosomal protein uS19.

The protein localises to the cytoplasm. Its function is as follows. An accessory protein needed during the final step in the assembly of 30S ribosomal subunit, possibly for assembly of the head region. Essential for efficient processing of 16S rRNA. May be needed both before and after RbfA during the maturation of 16S rRNA. It has affinity for free ribosomal 30S subunits but not for 70S ribosomes. This chain is Ribosome maturation factor RimM, found in Lactobacillus helveticus (strain DPC 4571).